Here is a 592-residue protein sequence, read N- to C-terminus: Aspartate--tRNA(Asp/Asn) ligase (592 aa).

Glu172 contacts L-aspartate. The tract at residues 196–199 is aspartate; that stretch reads QLFK. Arg218 provides a ligand contact to L-aspartate. ATP-binding positions include 218–220 and Gln227; that span reads RDE. His442 contacts L-aspartate. ATP is bound at residue Glu476. Residue Arg483 coordinates L-aspartate. 528–531 provides a ligand contact to ATP; the sequence is GWDR. Residues 553-592 form a disordered region; sequence SGTDPLTGAPTPITPEQRKEAGIDADPYAAAGRPPGRQSA.

The protein belongs to the class-II aminoacyl-tRNA synthetase family. Type 1 subfamily. Homodimer.

The protein localises to the cytoplasm. The catalysed reaction is tRNA(Asx) + L-aspartate + ATP = L-aspartyl-tRNA(Asx) + AMP + diphosphate. Aspartyl-tRNA synthetase with relaxed tRNA specificity since it is able to aspartylate not only its cognate tRNA(Asp) but also tRNA(Asn). Reaction proceeds in two steps: L-aspartate is first activated by ATP to form Asp-AMP and then transferred to the acceptor end of tRNA(Asp/Asn). This chain is Aspartate--tRNA(Asp/Asn) ligase, found in Acidothermus cellulolyticus (strain ATCC 43068 / DSM 8971 / 11B).